A 266-amino-acid polypeptide reads, in one-letter code: 3-methyl-2-oxobutanoate hydroxymethyltransferase (266 aa).

Positions 45 and 84 each coordinate Mg(2+). Residues 45–46 (DS), Asp-84, and Lys-112 contribute to the 3-methyl-2-oxobutanoate site. Glu-114 is a Mg(2+) binding site. The active-site Proton acceptor is Glu-181.

This sequence belongs to the PanB family. Homodecamer; pentamer of dimers. It depends on Mg(2+) as a cofactor.

It is found in the cytoplasm. The enzyme catalyses 3-methyl-2-oxobutanoate + (6R)-5,10-methylene-5,6,7,8-tetrahydrofolate + H2O = 2-dehydropantoate + (6S)-5,6,7,8-tetrahydrofolate. It participates in cofactor biosynthesis; (R)-pantothenate biosynthesis; (R)-pantoate from 3-methyl-2-oxobutanoate: step 1/2. Its function is as follows. Catalyzes the reversible reaction in which hydroxymethyl group from 5,10-methylenetetrahydrofolate is transferred onto alpha-ketoisovalerate to form ketopantoate. This Pseudomonas savastanoi pv. phaseolicola (strain 1448A / Race 6) (Pseudomonas syringae pv. phaseolicola (strain 1448A / Race 6)) protein is 3-methyl-2-oxobutanoate hydroxymethyltransferase.